Here is a 723-residue protein sequence, read N- to C-terminus: ADP-ribosylation factor-binding protein GGA3 (723 aa).

Residues 1 to 313 (MAEAEGESLE…GEVATLTLPD (313 aa)) form a binds to ARF1 (in long isoform) region. One can recognise a VHS domain in the interval 16-146 (ATNPSNRQED…MLKRQGIVQS (131 aa)). Phosphoserine occurs at positions 159 and 275. In terms of domain architecture, GAT spans 171–298 (DEEKSKLLAK…VINSYKTIIE (128 aa)). Residues 299–593 (GQVINGEVAT…IHVPLESIKP (295 aa)) form a unstructured hinge region. Residues 339-384 (SSVLAPAPTPPSSGIPILPPPPQASGPPRSRSSSQAEATLGPSSTS) form a disordered region. The span at 345-363 (APTPPSSGIPILPPPPQAS) shows a compositional bias: pro residues. Positions 364-374 (GPPRSRSSSQA) are enriched in low complexity. The short motif at 391–395 (DEELL) is the DXXLL element. The segment at 428 to 464 (DFFSPRPGTAACGASDAPLLQPSAPSSSSSQAPLPPP) is disordered. Residues 441-459 (ASDAPLLQPSAPSSSSSQA) are compositionally biased toward low complexity. Residues 594–715 (SSALPVTAYD…TEVGEVDQFP (122 aa)) form the GAE domain.

It belongs to the GGA protein family. As to quaternary structure, monomer. Interacts with GGA1 and GGA2. Binds to clathrin and activated ARFs, such as ARF1, ARF5 and ARF6. Binds RABEP1 and RABGEF1. Interacts with the membrane proteins M6PR/CD-MPR and IGF2R/CI-MPR and the accessory proteins SYNRG, EPN4, NECAP1, NECAP2 and AFTPH/aftiphilin. Interacts with TSG101 and UBC. Interacts with ADRA2B. Interacts with NTRK1; the interaction is independent of NTRK1 activation and ubiquitination. Interacts (via VHS domain) with BACE1 (via DXXLL motif). Phosphorylated by CK2 and dephosphorylated by PP2A. Phosphorylation of GGA3 allows the internal DXXLL motif to bind the VHS domain and to inhibit the recognition of cargo signals. In terms of processing, ubiquitinated. Post-translationally, proteolytically cleaved during apoptosis by CASP3. Ubiquitously expressed.

It localises to the golgi apparatus. It is found in the trans-Golgi network membrane. The protein resides in the endosome membrane. The protein localises to the early endosome membrane. Its subcellular location is the recycling endosome membrane. Plays a role in protein sorting and trafficking between the trans-Golgi network (TGN) and endosomes. Mediates the ARF-dependent recruitment of clathrin to the TGN and binds ubiquitinated proteins and membrane cargo molecules with a cytosolic acidic cluster-dileucine (DXXLL) motif. Mediates export of the GPCR receptor ADRA2B to the cell surface. nvolved in BACE1 transport and sorting as well as regulation of BACE1 protein levels. Regulates retrograde transport of BACE1 from endosomes to the trans-Golgi network via interaction through the VHS motif and dependent of BACE1 phosphorylation. Modulates BACE1 protein levels independently of the interaction between VHS domain and DXXLL motif through recognition of ubiquitination. Key player in a novel DXXLL-mediated endosomal sorting machinery to the recycling pathway that targets NTRK1 to the plasma membrane. The chain is ADP-ribosylation factor-binding protein GGA3 from Homo sapiens (Human).